A 313-amino-acid polypeptide reads, in one-letter code: Spermatid maturation protein 1 (313 aa).

Residues 29 to 49 form a helical membrane-spanning segment; that stretch reads ILLLLGLIICINIGINMVTLL. Disordered stretches follow at residues 71 to 90, 97 to 151, 243 to 263, and 291 to 313; these read KLRSPGKQTQPSKHSSPAVH, AVKM…HNWD, EPPILGPANVPDIPRRRSSGR, and LASGSSTAEGTRKDWVYRSMTER. Positions 76-85 are enriched in polar residues; the sequence is GKQTQPSKHS. Over residues 107–122 the composition is skewed to basic residues; the sequence is TRRRHRRGSSSRRARR. Positions 263–289 form a coiled coil; sequence RVTYDARDVRRRLRELTREVEALSHCY. Residues 300–313 are compositionally biased toward basic and acidic residues; that stretch reads GTRKDWVYRSMTER.

The protein resides in the membrane. Its subcellular location is the cytoplasm. Functionally, required for proper cytoplasm removal during spermatogenesis. In Bos taurus (Bovine), this protein is Spermatid maturation protein 1 (SPEM1).